The sequence spans 306 residues: Porphobilinogen deaminase (306 aa).

The residue at position 239 (C239) is an S-(dipyrrolylmethanemethyl)cysteine.

It belongs to the HMBS family. In terms of assembly, monomer. Dipyrromethane is required as a cofactor.

It carries out the reaction 4 porphobilinogen + H2O = hydroxymethylbilane + 4 NH4(+). It participates in porphyrin-containing compound metabolism; protoporphyrin-IX biosynthesis; coproporphyrinogen-III from 5-aminolevulinate: step 2/4. In terms of biological role, tetrapolymerization of the monopyrrole PBG into the hydroxymethylbilane pre-uroporphyrinogen in several discrete steps. The chain is Porphobilinogen deaminase (hemC) from Helicobacter pylori (strain ATCC 700392 / 26695) (Campylobacter pylori).